The chain runs to 226 residues: Translation initiation factor IF-3 (226 aa).

The interval 195–226 (FVPLAPLSPEDLIEEPELESESDSDAEPESDN) is disordered. Acidic residues predominate over residues 205–226 (DLIEEPELESESDSDAEPESDN).

This sequence belongs to the IF-3 family. Monomer.

It localises to the cytoplasm. IF-3 binds to the 30S ribosomal subunit and shifts the equilibrium between 70S ribosomes and their 50S and 30S subunits in favor of the free subunits, thus enhancing the availability of 30S subunits on which protein synthesis initiation begins. This chain is Translation initiation factor IF-3, found in Chlorobium chlorochromatii (strain CaD3).